We begin with the raw amino-acid sequence, 160 residues long: Ribosome maturation factor RimP (160 aa).

It belongs to the RimP family.

Its subcellular location is the cytoplasm. Its function is as follows. Required for maturation of 30S ribosomal subunits. The chain is Ribosome maturation factor RimP from Cronobacter sakazakii (strain ATCC BAA-894) (Enterobacter sakazakii).